Consider the following 280-residue polypeptide: UDP-3-O-acyl-N-acetylglucosamine deacetylase (280 aa).

Zn(2+) contacts are provided by His-79, His-237, and Asp-241. His-264 serves as the catalytic Proton donor.

Belongs to the LpxC family. Zn(2+) serves as cofactor.

The enzyme catalyses a UDP-3-O-[(3R)-3-hydroxyacyl]-N-acetyl-alpha-D-glucosamine + H2O = a UDP-3-O-[(3R)-3-hydroxyacyl]-alpha-D-glucosamine + acetate. It participates in glycolipid biosynthesis; lipid IV(A) biosynthesis; lipid IV(A) from (3R)-3-hydroxytetradecanoyl-[acyl-carrier-protein] and UDP-N-acetyl-alpha-D-glucosamine: step 2/6. In terms of biological role, catalyzes the hydrolysis of UDP-3-O-myristoyl-N-acetylglucosamine to form UDP-3-O-myristoylglucosamine and acetate, the committed step in lipid A biosynthesis. The sequence is that of UDP-3-O-acyl-N-acetylglucosamine deacetylase from Chlamydia caviae (strain ATCC VR-813 / DSM 19441 / 03DC25 / GPIC) (Chlamydophila caviae).